The following is a 351-amino-acid chain: DNA polymerase IV (351 aa).

The 182-residue stretch at 4–185 (IIHVDMDCFF…LPLAKIPGVG (182 aa)) folds into the UmuC domain. Mg(2+) is bound by residues D8 and D103. The active site involves E104.

It belongs to the DNA polymerase type-Y family. Monomer. Mg(2+) serves as cofactor.

Its subcellular location is the cytoplasm. The enzyme catalyses DNA(n) + a 2'-deoxyribonucleoside 5'-triphosphate = DNA(n+1) + diphosphate. Functionally, poorly processive, error-prone DNA polymerase involved in untargeted mutagenesis. Copies undamaged DNA at stalled replication forks, which arise in vivo from mismatched or misaligned primer ends. These misaligned primers can be extended by PolIV. Exhibits no 3'-5' exonuclease (proofreading) activity. May be involved in translesional synthesis, in conjunction with the beta clamp from PolIII. The chain is DNA polymerase IV from Shigella dysenteriae serotype 1 (strain Sd197).